Reading from the N-terminus, the 75-residue chain is ATP synthase subunit c (75 aa).

2 helical membrane-spanning segments follow: residues 12-32 and 49-69; these read LASI…GIVV and LTVL…IGIG.

The protein belongs to the ATPase C chain family. As to quaternary structure, F-type ATPases have 2 components, F(1) - the catalytic core - and F(0) - the membrane proton channel. F(1) has five subunits: alpha(3), beta(3), gamma(1), delta(1), epsilon(1). F(0) has three main subunits: a(1), b(2) and c(10-14). The alpha and beta chains form an alternating ring which encloses part of the gamma chain. F(1) is attached to F(0) by a central stalk formed by the gamma and epsilon chains, while a peripheral stalk is formed by the delta and b chains.

It is found in the cell membrane. Functionally, f(1)F(0) ATP synthase produces ATP from ADP in the presence of a proton or sodium gradient. F-type ATPases consist of two structural domains, F(1) containing the extramembraneous catalytic core and F(0) containing the membrane proton channel, linked together by a central stalk and a peripheral stalk. During catalysis, ATP synthesis in the catalytic domain of F(1) is coupled via a rotary mechanism of the central stalk subunits to proton translocation. In terms of biological role, key component of the F(0) channel; it plays a direct role in translocation across the membrane. A homomeric c-ring of between 10-14 subunits forms the central stalk rotor element with the F(1) delta and epsilon subunits. This is ATP synthase subunit c from Tropheryma whipplei (strain TW08/27) (Whipple's bacillus).